Consider the following 270-residue polypeptide: Thiazole synthase (270 aa).

Lys111 serves as the catalytic Schiff-base intermediate with DXP. 1-deoxy-D-xylulose 5-phosphate is bound by residues Gly172, 198–199, and 220–221; these read AG and NS. The segment at 249 to 270 is disordered; it reads AGRLPTRAQASPSSPTTGKVND. Polar residues predominate over residues 256 to 270; that stretch reads AQASPSSPTTGKVND.

This sequence belongs to the ThiG family. Homotetramer. Forms heterodimers with either ThiH or ThiS.

The protein resides in the cytoplasm. It carries out the reaction [ThiS sulfur-carrier protein]-C-terminal-Gly-aminoethanethioate + 2-iminoacetate + 1-deoxy-D-xylulose 5-phosphate = [ThiS sulfur-carrier protein]-C-terminal Gly-Gly + 2-[(2R,5Z)-2-carboxy-4-methylthiazol-5(2H)-ylidene]ethyl phosphate + 2 H2O + H(+). Its pathway is cofactor biosynthesis; thiamine diphosphate biosynthesis. Catalyzes the rearrangement of 1-deoxy-D-xylulose 5-phosphate (DXP) to produce the thiazole phosphate moiety of thiamine. Sulfur is provided by the thiocarboxylate moiety of the carrier protein ThiS. In vitro, sulfur can be provided by H(2)S. In Synechococcus sp. (strain WH7803), this protein is Thiazole synthase.